Here is a 346-residue protein sequence, read N- to C-terminus: 3-dehydroquinate synthase (346 aa).

NAD(+) contacts are provided by residues 61 to 66 (DGEAYK), 95 to 99 (GVIGD), 119 to 120 (TT), lysine 132, and lysine 141. Residues glutamate 174, histidine 233, and histidine 250 each coordinate Zn(2+).

It belongs to the sugar phosphate cyclases superfamily. Dehydroquinate synthase family. NAD(+) serves as cofactor. Co(2+) is required as a cofactor. Requires Zn(2+) as cofactor.

The protein resides in the cytoplasm. It carries out the reaction 7-phospho-2-dehydro-3-deoxy-D-arabino-heptonate = 3-dehydroquinate + phosphate. The protein operates within metabolic intermediate biosynthesis; chorismate biosynthesis; chorismate from D-erythrose 4-phosphate and phosphoenolpyruvate: step 2/7. Catalyzes the conversion of 3-deoxy-D-arabino-heptulosonate 7-phosphate (DAHP) to dehydroquinate (DHQ). The sequence is that of 3-dehydroquinate synthase from Wolinella succinogenes (strain ATCC 29543 / DSM 1740 / CCUG 13145 / JCM 31913 / LMG 7466 / NCTC 11488 / FDC 602W) (Vibrio succinogenes).